The following is a 520-amino-acid chain: Peptide chain release factor 3 (520 aa).

The tr-type G domain occupies 8 to 273; sequence ESRKTFAIIS…AYVDHAPMPN (266 aa). GTP-binding positions include 17-24, 85-89, and 139-142; these read SHPDAGKT, DTPGH, and NKLD.

The protein belongs to the TRAFAC class translation factor GTPase superfamily. Classic translation factor GTPase family. PrfC subfamily.

Its subcellular location is the cytoplasm. In terms of biological role, increases the formation of ribosomal termination complexes and stimulates activities of RF-1 and RF-2. It binds guanine nucleotides and has strong preference for UGA stop codons. It may interact directly with the ribosome. The stimulation of RF-1 and RF-2 is significantly reduced by GTP and GDP, but not by GMP. The sequence is that of Peptide chain release factor 3 from Staphylococcus carnosus (strain TM300).